Here is a 336-residue protein sequence, read N- to C-terminus: Inositol 2-dehydrogenase (336 aa).

The protein belongs to the Gfo/Idh/MocA family. As to quaternary structure, homotetramer.

It catalyses the reaction myo-inositol + NAD(+) = scyllo-inosose + NADH + H(+). Involved in the oxidation of myo-inositol (MI) to 2-keto-myo-inositol (2KMI or 2-inosose). This chain is Inositol 2-dehydrogenase, found in Acidiphilium cryptum (strain JF-5).